The chain runs to 379 residues: MPADDYPVTELTKALIARPSVTPLDEGCQTLMAERLSAIGFNIEPMVFEDTTNMWARRGNEGPVFCFAGHTDVVPTGDVSRWHTPPFVPTIIDGYLYGRGAADMKGSLAAMVIATECFVAKHPDHNGSIAFLITSDEEGPFINGTTRVIDTLEARNEKITWALVGEPSSTLKLGDVVKNGRRGSLTGNLTVKGIQGHVAYPHLADNPIHKAAPFLAELSQMHWDNGNEFFPPTSFQIANINGGTGASNVIPGALDVMFNFRYSTEVTADILIERVEALLKAHELDYDISWIFNGLPFLTGDGPLLDATRIAIRQVTGYETDPQTTGGTSDGRFIAPTGAKVLELGPVNATIHKVNECVKVDDLEQLALCYEVILEQLLC.

Position 70 (His-70) interacts with Zn(2+). Asp-72 is a catalytic residue. Zn(2+) is bound at residue Asp-103. Glu-137 acts as the Proton acceptor in catalysis. Residues Glu-138, Glu-166, and His-352 each contribute to the Zn(2+) site.

The protein belongs to the peptidase M20A family. DapE subfamily. In terms of assembly, homodimer. Zn(2+) serves as cofactor. It depends on Co(2+) as a cofactor.

It catalyses the reaction N-succinyl-(2S,6S)-2,6-diaminopimelate + H2O = (2S,6S)-2,6-diaminopimelate + succinate. It functions in the pathway amino-acid biosynthesis; L-lysine biosynthesis via DAP pathway; LL-2,6-diaminopimelate from (S)-tetrahydrodipicolinate (succinylase route): step 3/3. In terms of biological role, catalyzes the hydrolysis of N-succinyl-L,L-diaminopimelic acid (SDAP), forming succinate and LL-2,6-diaminopimelate (DAP), an intermediate involved in the bacterial biosynthesis of lysine and meso-diaminopimelic acid, an essential component of bacterial cell walls. The sequence is that of Succinyl-diaminopimelate desuccinylase from Shewanella baltica (strain OS155 / ATCC BAA-1091).